A 101-amino-acid chain; its full sequence is NAD(P)H-quinone oxidoreductase subunit 4L, chloroplastic (101 aa).

3 helical membrane-spanning segments follow: residues 2–22, 32–52, and 64–84; these read ILDS…YGLI, MSLE…SNFI, and IFIM…ILAI.

The protein belongs to the complex I subunit 4L family. In terms of assembly, NDH is composed of at least 16 different subunits, 5 of which are encoded in the nucleus.

It is found in the plastid. The protein resides in the chloroplast thylakoid membrane. The enzyme catalyses a plastoquinone + NADH + (n+1) H(+)(in) = a plastoquinol + NAD(+) + n H(+)(out). It carries out the reaction a plastoquinone + NADPH + (n+1) H(+)(in) = a plastoquinol + NADP(+) + n H(+)(out). In terms of biological role, NDH shuttles electrons from NAD(P)H:plastoquinone, via FMN and iron-sulfur (Fe-S) centers, to quinones in the photosynthetic chain and possibly in a chloroplast respiratory chain. The immediate electron acceptor for the enzyme in this species is believed to be plastoquinone. Couples the redox reaction to proton translocation, and thus conserves the redox energy in a proton gradient. In Chlorokybus atmophyticus (Soil alga), this protein is NAD(P)H-quinone oxidoreductase subunit 4L, chloroplastic.